Here is a 369-residue protein sequence, read N- to C-terminus: tRNA 2-selenouridine synthase (369 aa).

Positions 15–138 (FLNQHPMMDV…MRQYLIGVIE (124 aa)) constitute a Rhodanese domain. Cys-98 acts as the S-selanylcysteine intermediate in catalysis.

It belongs to the SelU family. As to quaternary structure, monomer.

It carries out the reaction 5-methylaminomethyl-2-thiouridine(34) in tRNA + selenophosphate + (2E)-geranyl diphosphate + H2O + H(+) = 5-methylaminomethyl-2-selenouridine(34) in tRNA + (2E)-thiogeraniol + phosphate + diphosphate. It catalyses the reaction 5-methylaminomethyl-2-thiouridine(34) in tRNA + (2E)-geranyl diphosphate = 5-methylaminomethyl-S-(2E)-geranyl-thiouridine(34) in tRNA + diphosphate. The catalysed reaction is 5-methylaminomethyl-S-(2E)-geranyl-thiouridine(34) in tRNA + selenophosphate + H(+) = 5-methylaminomethyl-2-(Se-phospho)selenouridine(34) in tRNA + (2E)-thiogeraniol. The enzyme catalyses 5-methylaminomethyl-2-(Se-phospho)selenouridine(34) in tRNA + H2O = 5-methylaminomethyl-2-selenouridine(34) in tRNA + phosphate. Involved in the post-transcriptional modification of the uridine at the wobble position (U34) of tRNA(Lys), tRNA(Glu) and tRNA(Gln). Catalyzes the conversion of 2-thiouridine (S2U-RNA) to 2-selenouridine (Se2U-RNA). Acts in a two-step process involving geranylation of 2-thiouridine (S2U) to S-geranyl-2-thiouridine (geS2U) and subsequent selenation of the latter derivative to 2-selenouridine (Se2U) in the tRNA chain. This is tRNA 2-selenouridine synthase from Shewanella sp. (strain W3-18-1).